A 378-amino-acid polypeptide reads, in one-letter code: Long-chain-fatty-acid--luciferin-component ligase (378 aa).

The protein belongs to the LuxE family.

It carries out the reaction a long-chain fatty acid + L-cysteinyl-[protein] + ATP = an S-(long-chain fatty acyl)-L-cysteinyl-[protein] + AMP + diphosphate. The protein operates within lipid metabolism; fatty acid reduction for biolumincescence. Acyl-protein synthetase activates tetradecanoic acid. It is a component of the fatty acid reductase complex responsible for converting tetradecanoic acid to the aldehyde which serves as substrate in the luciferase-catalyzed reaction. This Aliivibrio fischeri (Vibrio fischeri) protein is Long-chain-fatty-acid--luciferin-component ligase.